We begin with the raw amino-acid sequence, 339 residues long: Anthranilate phosphoribosyltransferase (339 aa).

5-phospho-alpha-D-ribose 1-diphosphate-binding positions include glycine 81, 84–85 (GD), serine 89, 91–94 (NVST), 109–117 (KHGNRALSS), and alanine 121. Residue glycine 81 participates in anthranilate binding. Serine 93 contributes to the Mg(2+) binding site. Asparagine 112 serves as a coordination point for anthranilate. Residue arginine 167 coordinates anthranilate. Mg(2+) contacts are provided by aspartate 226 and glutamate 227.

Belongs to the anthranilate phosphoribosyltransferase family. In terms of assembly, homodimer. The cofactor is Mg(2+).

It catalyses the reaction N-(5-phospho-beta-D-ribosyl)anthranilate + diphosphate = 5-phospho-alpha-D-ribose 1-diphosphate + anthranilate. Its pathway is amino-acid biosynthesis; L-tryptophan biosynthesis; L-tryptophan from chorismate: step 2/5. In terms of biological role, catalyzes the transfer of the phosphoribosyl group of 5-phosphorylribose-1-pyrophosphate (PRPP) to anthranilate to yield N-(5'-phosphoribosyl)-anthranilate (PRA). The sequence is that of Anthranilate phosphoribosyltransferase from Rhodopseudomonas palustris (strain BisB18).